A 348-amino-acid chain; its full sequence is Dihydroorotase (348 aa).

Zn(2+) contacts are provided by H17 and H19. Substrate-binding positions include 19–21 and N45; that span reads HLR. Residues K103, H140, and H178 each coordinate Zn(2+). An N6-carboxylysine modification is found at K103. H140 serves as a coordination point for substrate. L223 lines the substrate pocket. D251 serves as a coordination point for Zn(2+). The active site involves D251. Residues H255 and A267 each coordinate substrate.

The protein belongs to the metallo-dependent hydrolases superfamily. DHOase family. Class II DHOase subfamily. In terms of assembly, homodimer. Zn(2+) serves as cofactor.

It catalyses the reaction (S)-dihydroorotate + H2O = N-carbamoyl-L-aspartate + H(+). It functions in the pathway pyrimidine metabolism; UMP biosynthesis via de novo pathway; (S)-dihydroorotate from bicarbonate: step 3/3. Functionally, catalyzes the reversible cyclization of carbamoyl aspartate to dihydroorotate. In Salmonella heidelberg (strain SL476), this protein is Dihydroorotase.